Consider the following 101-residue polypeptide: Protein PIP-1 (101 aa).

Positions 1-23 are cleaved as a signal peptide; that stretch reads MGKCLLLPLLLVVLSSLLGFPQA. One can recognise a UPAR/Ly6 domain in the interval 24 to 101; it reads LECFQCQRVS…CHDSPFCNKF (78 aa). Cystine bridges form between cysteine 26-cysteine 53, cysteine 29-cysteine 38, cysteine 45-cysteine 71, cysteine 75-cysteine 91, and cysteine 92-cysteine 98. Asparagine 84 carries N-linked (GlcNAc...) asparagine glycosylation.

It is found in the secreted. The sequence is that of Protein PIP-1 from Sus scrofa (Pig).